A 495-amino-acid polypeptide reads, in one-letter code: Solute carrier family 2, facilitated glucose transporter member 3 (495 aa).

The Cytoplasmic portion of the chain corresponds to 1 to 10 (MGTQKVTVSL). Residues 11 to 32 (IFALSIATIGSFQFGYNTGVIN) traverse the membrane as a helical segment. The Extracellular portion of the chain corresponds to 33–64 (APETIIKDFLNYTLEEKSENLPTEVLLTSLWS). N-linked (GlcNAc...) asparagine glycosylation occurs at Asn43. A helical membrane pass occupies residues 65–85 (LSVAIFSVGGMIGSFSVGLFV). The Cytoplasmic portion of the chain corresponds to 86–90 (NRFGR). Residues 91–111 (RNSMLMVNLLAVAGGCLMGFC) form a helical membrane-spanning segment. Over 112-118 (KIAQSVE) the chain is Extracellular. A helical transmembrane segment spans residues 119–142 (MLILGRLIIGLFCGLCTGFVPMYI). Residues 143 to 153 (GEISPTALRGA) lie on the Cytoplasmic side of the membrane. A helical membrane pass occupies residues 154–174 (FGTLNQLGIVIGILVAQIFGL). Gln159 serves as a coordination point for D-glucose. Topologically, residues 175-183 (KVIMGTEEL) are extracellular. Residues 184 to 204 (WPLLLGFTIIPAVLQSAALPF) traverse the membrane as a helical segment. Residues 205–269 (CPESPRFLLI…LFRSRSYRQP (65 aa)) lie on the Cytoplasmic side of the membrane. A Phosphothreonine modification is found at Thr232. Residues 270 to 290 (IIISIMLQLSQQLSGINAVFY) form a helical membrane-spanning segment. The interval 277-279 (QLS) is important for selectivity against fructose. D-glucose contacts are provided by residues 280–281 (QQ) and Asn286. Over 291-304 (YSTGIFKDAGVEEP) the chain is Extracellular. A helical transmembrane segment spans residues 305–325 (IYATIGAGVVNTIFTVVSLFL). Residue Asn315 participates in D-glucose binding. Residues 326–331 (VERAGR) lie on the Cytoplasmic side of the membrane. A helical transmembrane segment spans residues 332-352 (RTLHMIGLGGMAVCSILMTIS). Topologically, residues 353–363 (LLLKDNYNWMS) are extracellular. The helical transmembrane segment at 364–389 (FVCIGAILVFVAFFEIGPGPIPWFIV) threads the bilayer. 2 residues coordinate D-glucose: Glu378 and Trp386. Residues 390-399 (AELFSQGPRP) are Cytoplasmic-facing. Residues 400–420 (AAMAVAGCSNWTSNFLVGLLF) form a helical membrane-spanning segment. Over 421 to 429 (PSAAFYLGA) the chain is Extracellular. Residues 430–450 (YVFIIFTGFLIVFLVFTFFKV) traverse the membrane as a helical segment. Topologically, residues 451–495 (PETRGRTFEEITRAFEGQGQDANRAEKGPIVEMNSMQPVKETATV) are cytoplasmic. Ser485 carries the phosphoserine modification. Position 492 is a phosphothreonine (Thr492).

It belongs to the major facilitator superfamily. Sugar transporter (TC 2.A.1.1) family. Glucose transporter subfamily. In terms of assembly, interacts with SMIM43; the interaction may promote SLC2A3-mediated glucose transport to meet the energy needs of mesendoderm differentiation.

It is found in the cell membrane. The protein resides in the perikaryon. The protein localises to the cell projection. It catalyses the reaction D-glucose(out) = D-glucose(in). It carries out the reaction D-galactose(in) = D-galactose(out). Its activity is regulated as follows. Deoxyglucose transport is inhibited by D-glucose, D-galactose and maltose. Galactose transport is inhibited by D-glucose and maltose. Its function is as follows. Facilitative glucose transporter. Can also mediate the uptake of various other monosaccharides across the cell membrane. Mediates the uptake of glucose, 2-deoxyglucose, galactose, mannose, xylose and fucose, and probably also dehydroascorbate. Does not mediate fructose transport. Required for mesendoderm differentiation. The sequence is that of Solute carrier family 2, facilitated glucose transporter member 3 from Canis lupus familiaris (Dog).